A 128-amino-acid chain; its full sequence is MTDTLDLEMDGIITEQRLLERRRAAAEQQRMNQELQDMVNLHQCKRGIFCLVKQAKVTYDSNTTGHRLSYKLPTKRQKLVVMVGEKPITITQHSVETEGCIHSPCQGPEDLCTLIKTLCGLKDLIPFN.

Belongs to the adenoviridae E3_15 family.

Protects virus-infected cells from TNF-induced cytolysis. In Human adenovirus C serotype 5 (HAdV-5), this protein is Early E3 14.5 kDa protein.